The following is a 440-amino-acid chain: Suppressor of cytokine signaling 4 (440 aa).

Over residues Met1 to Lys10 the composition is skewed to polar residues. The interval Met1–Gly29 is disordered. A compositionally biased stretch (basic and acidic residues) spans Val12–Gly29. Positions Cys286–Leu381 constitute an SH2 domain. Residues Leu376–Lys425 enclose the SOCS box domain.

It functions in the pathway protein modification; protein ubiquitination. SOCS family proteins form part of a classical negative feedback system that regulates cytokine signal transduction. Substrate-recognition component of a SCF-like ECS (Elongin BC-CUL2/5-SOCS-box protein) E3 ubiquitin-protein ligase complex which mediates the ubiquitination and subsequent proteasomal degradation of target proteins. Inhibits EGF signaling by mediating the degradation of the Tyr-phosphorylated EGF receptor/EGFR. The protein is Suppressor of cytokine signaling 4 (SOCS4) of Pongo abelii (Sumatran orangutan).